Reading from the N-terminus, the 336-residue chain is Glyceraldehyde-3-phosphate dehydrogenase (336 aa).

NAD(+) contacts are provided by residues 12–13 (RI), Asp34, Arg78, and Thr121. D-glyceraldehyde 3-phosphate contacts are provided by residues 151–153 (SCT), Thr182, Arg199, 212–213 (TG), and Arg235. Cys152 (nucleophile) is an active-site residue. Asn316 contributes to the NAD(+) binding site.

It belongs to the glyceraldehyde-3-phosphate dehydrogenase family. In terms of assembly, homotetramer.

It is found in the cytoplasm. The catalysed reaction is D-glyceraldehyde 3-phosphate + phosphate + NAD(+) = (2R)-3-phospho-glyceroyl phosphate + NADH + H(+). It functions in the pathway carbohydrate degradation; glycolysis; pyruvate from D-glyceraldehyde 3-phosphate: step 1/5. Functionally, catalyzes the oxidative phosphorylation of glyceraldehyde 3-phosphate (G3P) to 1,3-bisphosphoglycerate (BPG) using the cofactor NAD. The first reaction step involves the formation of a hemiacetal intermediate between G3P and a cysteine residue, and this hemiacetal intermediate is then oxidized to a thioester, with concomitant reduction of NAD to NADH. The reduced NADH is then exchanged with the second NAD, and the thioester is attacked by a nucleophilic inorganic phosphate to produce BPG. The protein is Glyceraldehyde-3-phosphate dehydrogenase (gap) of Streptococcus dysgalactiae subsp. equisimilis (Streptococcus equisimilis).